The primary structure comprises 531 residues: Serine protease gd (531 aa).

The first 19 residues, 1–19 (MRLHLAAILILCIEHVTKA), serve as a signal peptide directing secretion. Residues 155–174 (PEEEEVRKTDDKPPSTPHIQ) form a disordered region. The region spanning 246-531 (IESDSADSLP…FLDWITAFVI (286 aa)) is the Peptidase S1 domain. Asn-272 is a glycosylation site (N-linked (GlcNAc...) asparagine). Cysteines 280 and 296 form a disulfide. Catalysis depends on charge relay system residues His-295 and Asp-350. 2 N-linked (GlcNAc...) asparagine glycosylation sites follow: Asn-397 and Asn-445. A disulfide bridge links Cys-432 with Cys-449. The active-site Charge relay system is the Ser-471.

Belongs to the peptidase S1 family. In terms of processing, proteolytically activated by the protease ndl. In terms of tissue distribution, expression begins in previtellogenic stages and is seen in germline-derived nurse cells of the germarium. Expression continues throughout oogenesis with transcripts from the nurse cells accumulating in the oocytes. Most abundant in the ovaries, the level of protein decreases from the moment of egg laying and is essentially gone by 4 hours.

The protein localises to the secreted. Its function is as follows. Component of the extracellular signaling pathway that establishes the dorsal-ventral pathway of the embryo. A protease cascade involving ndl, gd, snk and ea results in activation of the spz Toll receptor ligand; acts downstream of ndl but upstream of snk and ea. Activation of ea requires activation of the ndl-gd-snk protease cascade and sulfation of a vitelline membrane component by pip. Localized activation of the Toll receptor in the ventral region of the embryo defines cell identities along the dorsal-ventral continuum. The sequence is that of Serine protease gd from Drosophila melanogaster (Fruit fly).